A 710-amino-acid chain; its full sequence is Adenylosuccinate synthetase (710 aa).

Residues 1–54 (MPVRRYGGRYNSSSPGVSNALNPSRTAGWPLSPSPATGSKPASTHHDPVPQEAY) form a disordered region. The segment covering 10 to 25 (YNSSSPGVSNALNPSR) has biased composition (polar residues). The segment covering 44–54 (THHDPVPQEAY) has biased composition (basic and acidic residues). GTP is bound by residues 180-186 (GDEGKGK) and 210-212 (GHT). Residue aspartate 181 is the Proton acceptor of the active site. Residues aspartate 181 and glycine 210 each coordinate Mg(2+). Residues 181–184 (DEGK), 208–211 (NAGH), threonine 295, lysine 309, glutamine 421, threonine 437, and lysine 567 each bind IMP. Histidine 211 functions as the Proton donor in the catalytic mechanism. 563–569 (AVTKKPR) lines the substrate pocket. GTP-binding positions include arginine 569 and 697–699 (GNG).

This sequence belongs to the adenylosuccinate synthetase family. Homodimer. The cofactor is Mg(2+).

The protein localises to the cytoplasm. It carries out the reaction IMP + L-aspartate + GTP = N(6)-(1,2-dicarboxyethyl)-AMP + GDP + phosphate + 2 H(+). The protein operates within purine metabolism; AMP biosynthesis via de novo pathway; AMP from IMP: step 1/2. Its function is as follows. Plays an important role in the salvage pathway for purine nucleotide biosynthesis. Catalyzes the first committed step in the biosynthesis of AMP from IMP. This is Adenylosuccinate synthetase from Leishmania major.